Here is a 461-residue protein sequence, read N- to C-terminus: Fumarate hydratase class II (461 aa).

Substrate contacts are provided by residues 97–99, 127–130, 137–139, and T185; these read SGT, HPND, and SSN. H186 acts as the Proton donor/acceptor in catalysis. The active site involves S316. Residues S317 and 322–324 each bind substrate; that span reads KVN.

It belongs to the class-II fumarase/aspartase family. Fumarase subfamily. As to quaternary structure, homotetramer.

The protein resides in the cytoplasm. The enzyme catalyses (S)-malate = fumarate + H2O. Its pathway is carbohydrate metabolism; tricarboxylic acid cycle; (S)-malate from fumarate: step 1/1. Functionally, involved in the TCA cycle. Catalyzes the stereospecific interconversion of fumarate to L-malate. This Oceanobacillus iheyensis (strain DSM 14371 / CIP 107618 / JCM 11309 / KCTC 3954 / HTE831) protein is Fumarate hydratase class II.